Consider the following 303-residue polypeptide: Histone deacetylase HDT2 (303 aa).

Acidic residues predominate over residues 100-112 (EMDLDSEDEEEEL). The segment at 100 to 282 (EMDLDSEDEE…SGGSVPCKSC (183 aa)) is disordered. Basic and acidic residues predominate over residues 119 to 133 (ENGKADGKEEQKNQE). Residues 154 to 203 (DSDDSDEDESDDSDEDDSDDSDEGEGLSPDEGDDDSSDEDDTSDDDEEET) are compositionally biased toward acidic residues. Residues 204–217 (PTPKKPEAGKKRGA) are compositionally biased toward basic and acidic residues. A C2H2-type zinc finger spans residues 277-300 (VPCKSCSKTFNSEMALQAHSKAKH).

Belongs to the histone deacetylase HD2 family. In terms of assembly, multimer. Possibly forms a homotrimer with HDT1 and/or HDT3.

The protein resides in the nucleus. The protein localises to the nucleolus. Functionally, mediates the deacetylation of lysine residues on the N-terminal part of the core histones (H2A, H2B, H3 and H4). Histone deacetylation gives a tag for epigenetic repression and plays an important role in transcriptional regulation, cell cycle progression and developmental events. The protein is Histone deacetylase HDT2 (HDT2) of Zea mays (Maize).